The chain runs to 644 residues: ATP-dependent zinc metalloprotease FtsH (644 aa).

Topologically, residues 1 to 4 (MAKN) are cytoplasmic. The chain crosses the membrane as a helical span at residues 5 to 25 (LILWLVIAVVLMSVFQSFGPS). Residues 26–98 (ESNGRKVDYS…VGEPPEEPSL (73 aa)) are Periplasmic-facing. The helical transmembrane segment at 99–119 (LASIFISWFPMLLLIGVWIFF) threads the bilayer. Over 120-644 (MRQMQGGGGK…NTMSEQLGDK (525 aa)) the chain is Cytoplasmic. 192–199 (GPPGTGKT) is an ATP binding site. Position 414 (His-414) interacts with Zn(2+). Residue Glu-415 is part of the active site. Residues His-418 and Asp-492 each coordinate Zn(2+). The interval 598–644 (VRPPAGWEEPGASNNSGDNGSPKAPRPVDEPRTPNPGNTMSEQLGDK) is disordered. Positions 632-644 (NPGNTMSEQLGDK) are enriched in polar residues.

In the central section; belongs to the AAA ATPase family. This sequence in the C-terminal section; belongs to the peptidase M41 family. Homohexamer. The cofactor is Zn(2+).

The protein localises to the cell inner membrane. Its function is as follows. Acts as a processive, ATP-dependent zinc metallopeptidase for both cytoplasmic and membrane proteins. Plays a role in the quality control of integral membrane proteins. The protein is ATP-dependent zinc metalloprotease FtsH of Shigella flexneri.